The sequence spans 471 residues: Tryptophanase (471 aa).

Lysine 5, lysine 115, and lysine 156 each carry N6-acetyllysine. Lysine 270 is subject to N6-(pyridoxal phosphate)lysine. The residue at position 450 (lysine 450) is an N6-acetyllysine.

Belongs to the beta-eliminating lyase family. Homotetramer. Pyridoxal 5'-phosphate is required as a cofactor.

The catalysed reaction is L-tryptophan + H2O = indole + pyruvate + NH4(+). It participates in amino-acid degradation; L-tryptophan degradation via pyruvate pathway; indole and pyruvate from L-tryptophan: step 1/1. This chain is Tryptophanase, found in Escherichia coli O6:H1 (strain CFT073 / ATCC 700928 / UPEC).